Reading from the N-terminus, the 186-residue chain is ATP synthase subunit b (186 aa).

Residues isoleucine 28–proline 48 traverse the membrane as a helical segment.

It belongs to the ATPase B chain family. As to quaternary structure, F-type ATPases have 2 components, F(1) - the catalytic core - and F(0) - the membrane proton channel. F(1) has five subunits: alpha(3), beta(3), gamma(1), delta(1), epsilon(1). F(0) has three main subunits: a(1), b(2) and c(10-14). The alpha and beta chains form an alternating ring which encloses part of the gamma chain. F(1) is attached to F(0) by a central stalk formed by the gamma and epsilon chains, while a peripheral stalk is formed by the delta and b chains.

The protein resides in the cell membrane. Its function is as follows. F(1)F(0) ATP synthase produces ATP from ADP in the presence of a proton or sodium gradient. F-type ATPases consist of two structural domains, F(1) containing the extramembraneous catalytic core and F(0) containing the membrane proton channel, linked together by a central stalk and a peripheral stalk. During catalysis, ATP synthesis in the catalytic domain of F(1) is coupled via a rotary mechanism of the central stalk subunits to proton translocation. In terms of biological role, component of the F(0) channel, it forms part of the peripheral stalk, linking F(1) to F(0). This chain is ATP synthase subunit b, found in Corynebacterium jeikeium (strain K411).